The sequence spans 185 residues: ATP synthase subunit b, chloroplastic (185 aa).

A helical membrane pass occupies residues 7–29 (SFVYLVGHCPFAGSFAFNTDILA).

It belongs to the ATPase B chain family. In terms of assembly, F-type ATPases have 2 components, F(1) - the catalytic core - and F(0) - the membrane proton channel. F(1) has five subunits: alpha(3), beta(3), gamma(1), delta(1), epsilon(1). F(0) has four main subunits: a(1), b(1), b'(1) and c(10-14). The alpha and beta chains form an alternating ring which encloses part of the gamma chain. F(1) is attached to F(0) by a central stalk formed by the gamma and epsilon chains, while a peripheral stalk is formed by the delta, b and b' chains.

The protein resides in the plastid. It is found in the chloroplast thylakoid membrane. F(1)F(0) ATP synthase produces ATP from ADP in the presence of a proton or sodium gradient. F-type ATPases consist of two structural domains, F(1) containing the extramembraneous catalytic core and F(0) containing the membrane proton channel, linked together by a central stalk and a peripheral stalk. During catalysis, ATP synthesis in the catalytic domain of F(1) is coupled via a rotary mechanism of the central stalk subunits to proton translocation. Functionally, component of the F(0) channel, it forms part of the peripheral stalk, linking F(1) to F(0). The polypeptide is ATP synthase subunit b, chloroplastic (Dioscorea elephantipes (Elephant's foot yam)).